A 208-amino-acid polypeptide reads, in one-letter code: MSTVVVKGNVNGGVQQPRMRRRQSLRRRANRVQPVVMVTAPGQPRRRRRRRGGNRRSRRTGVPRGRGSSETFVFTKDNLVGNTQGSFTFGPSLSDCPAFKDGILKAYHEYKITSILLQFVSEASSTSSGSIAYELDPHCKVSSLQSYVNKFQITKGGAKTYQARMINGVEWHDSSEDQCRILWKGNGKSSDSAGSFRVTIKVALQNPK.

Low complexity predominate over residues M1 to P17. The tract at residues M1–S68 is disordered. 2 stretches are compositionally biased toward basic residues: residues R18–N30 and P44–G61.

The protein belongs to the luteoviruses capsid protein family.

The protein resides in the virion. Functionally, major capsid protein that self-assembles to form an icosahedral capsid with a T=3 symmetry, about 23 nm in diameter, and consisting of 180 capsid proteins monomers. Most of the 180 monomers are the major capsid protein, but a small percentage contain the minor capsid protein, which has a long C-terminal extension. The protein is Major capsid protein of Potato leafroll virus (strain Potato/Scotland/strain 1/1984) (PLrV).